The chain runs to 67 residues: DNA-directed RNA polymerase subunit omega (67 aa).

Belongs to the RNA polymerase subunit omega family. The RNAP catalytic core consists of 2 alpha, 1 beta, 1 beta' and 1 omega subunit. When a sigma factor is associated with the core the holoenzyme is formed, which can initiate transcription.

It catalyses the reaction RNA(n) + a ribonucleoside 5'-triphosphate = RNA(n+1) + diphosphate. Promotes RNA polymerase assembly. Latches the N- and C-terminal regions of the beta' subunit thereby facilitating its interaction with the beta and alpha subunits. This is DNA-directed RNA polymerase subunit omega from Nautilia profundicola (strain ATCC BAA-1463 / DSM 18972 / AmH).